The sequence spans 2346 residues: N-benzoylphenylalaninol synthetase apmA (2346 aa).

Residues 263-652 form an adenylation 1 region; sequence ESAAQKSPDA…GRKDLQVKIR (390 aa). Positions 784-860 constitute a Carrier 1 domain; the sequence is MPTTTTEMTL…DMAKAMTSTR (77 aa). Ser821 carries the post-translational modification O-(pantetheine 4'-phosphoryl)serine. Positions 896–1306 are condensation; that stretch reads QDAYPCSPLQ…ISPQDKENLL (411 aa). The adenylation 2 stretch occupies residues 1330-1713; sequence SQPNAPAICA…GRKDTQVKIR (384 aa). The Carrier 2 domain occupies 1842–1924; sequence SALRASEDKA…GLAAFIDAEL (83 aa). Position 1883 is an O-(pantetheine 4'-phosphoryl)serine (Ser1883). Residues 1960 to 2311 are reductase (R) domain; sequence VTGGTGFLGT…RNVQFLVEAG (352 aa).

This sequence belongs to the NRP synthetase family.

It catalyses the reaction benzoate + L-phenylalanine + 2 AH2 + 2 ATP = N-benzoyl-L-phenylalaninol + 2 A + 2 AMP + 2 diphosphate + H(+). It functions in the pathway secondary metabolite biosynthesis. In terms of biological role, nonribosomal peptide synthase; part of the gene cluster that mediates the biosynthesis of asperphenamate, a rare linear amino acid ester that exhibits antitumor activity towards a number of cell lines. The structure of asperphenamate contains two subunits, N-benzoylphenylalanine and N-benzoylphenylalaninol, which are connected by an inter-molecular ester bond. The first step of asperphenamate biosynthesis is the generation of N-benzoylphenylalaninol by the nonribosomal peptide synthase apmA. Using phenylalanine and benzoic acid as substrates, apmA catalyzes amide bond formation and tethers the intermediate into the NRPS chain. Then, the terminal R domain of apmA catalyzes the reduction reaction to get the shunt product N-benzoylphenylalaninol. Subsequently, the nonribosomal peptide synthase apmB activates the same substrates as does apmA (phenylalanine and benzoic acid) to produce N-benzoylphenylalanine before condensing N-benzoylphenylalanine and N-benzoylphenylalaninol to release asperphenamate. The sequence is that of N-benzoylphenylalaninol synthetase apmA from Penicillium brevicompactum.